A 248-amino-acid chain; its full sequence is ATP synthase subunit a (248 aa).

The propeptide at 1 to 3 (MLY) is removed in mature form. 7 helical membrane passes run 24-44 (MSLT…FFIF), 86-106 (IYMP…LVGL), 117-137 (FALP…IGFV), 146-166 (VLLP…VELL), 183-203 (ITSG…TSGI), 205-225 (LLFV…ELIV), and 227-247 (ILQA…SLIL).

The protein belongs to the ATPase A chain family. F-type ATPases have 2 components, CF(1) - the catalytic core - and CF(0) - the membrane proton channel. CF(1) has five subunits: alpha(3), beta(3), gamma(1), delta(1), epsilon(1). CF(0) has three main subunits: a, b and c.

It is found in the mitochondrion inner membrane. Mitochondrial membrane ATP synthase (F(1)F(0) ATP synthase or Complex V) produces ATP from ADP in the presence of a proton gradient across the membrane which is generated by electron transport complexes of the respiratory chain. F-type ATPases consist of two structural domains, F(1) - containing the extramembraneous catalytic core and F(0) - containing the membrane proton channel, linked together by a central stalk and a peripheral stalk. During catalysis, ATP synthesis in the catalytic domain of F(1) is coupled via a rotary mechanism of the central stalk subunits to proton translocation. Key component of the proton channel; it may play a direct role in the translocation of protons across the membrane. The polypeptide is ATP synthase subunit a (Zancudomyces culisetae (Gut fungus)).